We begin with the raw amino-acid sequence, 731 residues long: MTEQSDLFPAPAPKGSALVATKIKALREQLNRWAHEYYVQDTPSVPDAEYDRAFQQLQALEGAYPDLVTPDSPTQRVLGAVLDGLTPVRHRVPMLSIRTETDTEASGAQAFDARVRRELKLPPDAPPVEYVAEPKFDGLAMSLRYEGGRLVQAATRGDGEVGEDVTHNVRTIRQIPLSLPAGVPPVLEVRGEVYMRRADFDALNERQREKGDKTFVNPRNAAAGAVRQLDSGITAQRPLSFFAYGLGEVTPAAEGGPDFGTHFGMLQQLKEWGFPVAAQVQIAQGASELIAFHQRVGAERDALPYDIDGVVYKVNSLALQRQLGFVTREPRWAVAHKYPAQEMVTRVEGIDVQVGRTGKLTPVARLAPVFVGGVTVTNATLHNLFELRRKKVRVGDQVIVRRAGDVIPEVVGVVPAGAGLAVLAGSDALVDAASSADGTAPAQPLAGPRQPYVPNFRMPRQCPICGSAVVREPGEVNHRCSGGLFCPAQRKQAVLHFAQRRAMDIEGLGEKLVDQLVDGHVIRTLPDLYRLGLSSLAQLDRMAEKSAQNVLDALDKSKRTTLARFLFGLGIRHVGEATAKDLARHFGQLDAIMDAGVEQLLQVNDVGPVVAEAIHTFFAQPHNREVVEQLRACGVTWDESEPAAAATLPLAGMTVVLTGTLPTLGRDAAKDLLESAGAKVAGSVSKKTHYVVAGADAGSKLAKAQELGIPVLDEDGLHALLRGTPPNAGGA.

NAD(+) contacts are provided by residues 47 to 51, 96 to 97, and glutamate 133; these read DAEYD and SI. Lysine 135 acts as the N6-AMP-lysine intermediate in catalysis. 4 residues coordinate NAD(+): arginine 156, glutamate 192, lysine 313, and lysine 337. Zn(2+) is bound by residues cysteine 462, cysteine 465, cysteine 480, and cysteine 486. Residues 645-731 enclose the BRCT domain; that stretch reads AATLPLAGMT…RGTPPNAGGA (87 aa).

This sequence belongs to the NAD-dependent DNA ligase family. LigA subfamily. Mg(2+) is required as a cofactor. Mn(2+) serves as cofactor.

It catalyses the reaction NAD(+) + (deoxyribonucleotide)n-3'-hydroxyl + 5'-phospho-(deoxyribonucleotide)m = (deoxyribonucleotide)n+m + AMP + beta-nicotinamide D-nucleotide.. DNA ligase that catalyzes the formation of phosphodiester linkages between 5'-phosphoryl and 3'-hydroxyl groups in double-stranded DNA using NAD as a coenzyme and as the energy source for the reaction. It is essential for DNA replication and repair of damaged DNA. This chain is DNA ligase, found in Acidovorax sp. (strain JS42).